Consider the following 49-residue polypeptide: Large ribosomal subunit protein bL33B (49 aa).

Belongs to the bacterial ribosomal protein bL33 family.

The chain is Large ribosomal subunit protein bL33B from Bacillus anthracis.